The following is a 316-amino-acid chain: Protoheme IX farnesyltransferase (316 aa).

Helical transmembrane passes span 28-48 (IIPL…KGQV), 50-70 (PLLL…AQTL), 99-119 (HALI…VFFV), 122-142 (LSGF…THLL), 150-170 (IVIG…AVTG), 178-198 (ILFA…ALMI), 223-243 (IWLY…PLAA), 244-264 (CGVV…KKAW), and 293-313 (AMVI…ASLF).

The protein belongs to the UbiA prenyltransferase family. Protoheme IX farnesyltransferase subfamily.

It localises to the cell inner membrane. It catalyses the reaction heme b + (2E,6E)-farnesyl diphosphate + H2O = Fe(II)-heme o + diphosphate. The protein operates within porphyrin-containing compound metabolism; heme O biosynthesis; heme O from protoheme: step 1/1. Its function is as follows. Converts heme B (protoheme IX) to heme O by substitution of the vinyl group on carbon 2 of heme B porphyrin ring with a hydroxyethyl farnesyl side group. The chain is Protoheme IX farnesyltransferase from Microcystis aeruginosa (strain NIES-843 / IAM M-2473).